Reading from the N-terminus, the 164-residue chain is Small ribosomal subunit protein uS5 (164 aa).

Positions 10-73 constitute an S5 DRBM domain; that stretch reads LEERVVAINR…EDAKKNLIEV (64 aa).

This sequence belongs to the universal ribosomal protein uS5 family. As to quaternary structure, part of the 30S ribosomal subunit. Contacts proteins S4 and S8.

With S4 and S12 plays an important role in translational accuracy. Functionally, located at the back of the 30S subunit body where it stabilizes the conformation of the head with respect to the body. This chain is Small ribosomal subunit protein uS5, found in Streptococcus gordonii (strain Challis / ATCC 35105 / BCRC 15272 / CH1 / DL1 / V288).